The primary structure comprises 201 residues: dCTP deaminase, dUMP-forming (201 aa).

DCTP contacts are provided by residues 101–106, Asp119, 127–129, Gln148, Tyr162, and Gln174; these read KSSLGR and TLE. Catalysis depends on Glu129, which acts as the Proton donor/acceptor.

Belongs to the dCTP deaminase family. As to quaternary structure, homotrimer.

It catalyses the reaction dCTP + 2 H2O = dUMP + NH4(+) + diphosphate. Its pathway is pyrimidine metabolism; dUMP biosynthesis; dUMP from dCTP: step 1/1. Its function is as follows. Bifunctional enzyme that catalyzes both the deamination of dCTP to dUTP and the hydrolysis of dUTP to dUMP without releasing the toxic dUTP intermediate. In Clavibacter michiganensis subsp. michiganensis (strain NCPPB 382), this protein is dCTP deaminase, dUMP-forming.